The chain runs to 544 residues: Probable protein kinase UbiB (544 aa).

The region spanning 123-504 is the Protein kinase domain; the sequence is DFDENALASA…QRWQKKMFVL (382 aa). ATP-binding positions include 129 to 137 and lysine 155; that span reads LASASIAQV. Catalysis depends on aspartate 290, which acts as the Proton acceptor. The next 2 helical transmembrane spans lie at 501–521 and 523–543; these read MFVL…FAAL and LAIS…GFLL.

This sequence belongs to the ABC1 family. UbiB subfamily.

It localises to the cell inner membrane. The protein operates within cofactor biosynthesis; ubiquinone biosynthesis [regulation]. Functionally, is probably a protein kinase regulator of UbiI activity which is involved in aerobic coenzyme Q (ubiquinone) biosynthesis. This chain is Probable protein kinase UbiB, found in Histophilus somni (strain 129Pt) (Haemophilus somnus).